Reading from the N-terminus, the 125-residue chain is Protein AC4 (125 aa).

This sequence belongs to the geminiviridae protein AC4/C4 family.

Functionally, pathogenicity determinant. May act as a suppressor of RNA-mediated gene silencing, also known as post-transcriptional gene silencing (PTGS), a mechanism of plant viral defense that limits the accumulation of viral RNAs. The sequence is that of Protein AC4 from Cucurbita moschata (Winter crookneck squash).